The following is a 49-amino-acid chain: Large ribosomal subunit protein eL40 (49 aa).

The protein belongs to the eukaryotic ribosomal protein eL40 family.

The sequence is that of Large ribosomal subunit protein eL40 from Archaeoglobus fulgidus (strain ATCC 49558 / DSM 4304 / JCM 9628 / NBRC 100126 / VC-16).